Reading from the N-terminus, the 258-residue chain is tRNA pseudouridine synthase A (258 aa).

Residue Asp-52 is the Nucleophile of the active site. Tyr-110 serves as a coordination point for substrate.

The protein belongs to the tRNA pseudouridine synthase TruA family. Homodimer.

The enzyme catalyses uridine(38/39/40) in tRNA = pseudouridine(38/39/40) in tRNA. Formation of pseudouridine at positions 38, 39 and 40 in the anticodon stem and loop of transfer RNAs. This chain is tRNA pseudouridine synthase A, found in Francisella tularensis subsp. mediasiatica (strain FSC147).